Here is an 851-residue protein sequence, read N- to C-terminus: ATP-dependent DNA helicase DDX31 (851 aa).

The interval 1–196 is disordered; that stretch reads MAPDLASQRH…STSDRNQEER (196 aa). Residues 230 to 259 carry the Q motif motif; sequence AAFHELGLHPHLISTINTVLKMSSMTSVQK. The region spanning 262 to 443 is the Helicase ATP-binding domain; the sequence is IPVLLEGRDA…DISLHDPVSI (182 aa). Residue 275-282 coordinates ATP; it reads SQTGSGKT. Residues 388–391 carry the DEAD box motif; it reads DEAD. Residues 480 to 659 enclose the Helicase C-terminal domain; sequence SLKQHVTVVP…VSEIKMEDIL (180 aa). Disordered stretches follow at residues 762–784 and 804–851; these read KKRK…HSLA and KQNA…SQKV. Residue arginine 828 is modified to Omega-N-methylarginine. A compositionally biased stretch (basic and acidic residues) spans 841-851; sequence VQRDSKTSQKV.

It belongs to the DEAD box helicase family. DDX31/DBP7 subfamily. In terms of assembly, interacts with NPM1; this interaction prevents interaction between NPM1 and HDM2. Weakly or undetectably expressed in normal organs. Up-regulated in renal cell carcinoma.

It localises to the nucleus. The protein localises to the nucleolus. It catalyses the reaction ATP + H2O = ADP + phosphate + H(+). Functionally, may have DNA helicase activity and RNA helicase activity. Probably have ssDNA and RNA dependent ATPase activity. Plays a role in ribosome biogenesis and TP53/p53 regulation through its interaction with NPM1. The chain is ATP-dependent DNA helicase DDX31 from Homo sapiens (Human).